Here is a 601-residue protein sequence, read N- to C-terminus: MTVHYVHEGPEPQESRYSIPQHTTWMDPNNRRLRVITIGAGFSGILMAYQIQKQCANIEHVVYEKNHDIGGTWLTNRYPNAGCDVPSHAYTYRFALYPDWPRYFSYASDIWEYLDKVCAAFKLRQYMQFRTEVIKACWNEEEGQWKVRLRRQRPGQEPEEFDDHCHILLNACGVLSNPKWPDTPGLHDRFKGRVIHTAAWPDDYGEVQWNSDRVAVIGSGASSIQAVAGIQPHVGHLDIFVRTGVWFGVLAGNTGAPTKIYSEAERAQFRSNPSALVEHTKSIEAEVNGMWGAFYRDSMAQKGASAFFRQRMASIIKDDRLAKGFTPTFGFGCRRITPGDPYMHAIQQANVDVHFTAVASCTEDGIVGADGIERLVDTIVCASGFDNTYRPQFPIIGRRGVDLRDKWKTNPEAYLGLAVPDMPNYITFIGPSWPIQNGSVMAPLHSVSEYAIQFLKKMQNENIRAWAPRQQITDRFNEHVQEWVKHTVWSDQCRSWYKNNETGRVNAIWPGSSLHYQAVIERPRYEDFEISYADANPWAHLGMGWTMLDRAGGKQADVSPHLCLENIDPVWFKSIGGDVDILRKQLEKGHTLPNNASHAEA.

Residues 42–43, Glu-64, Trp-73, Asp-84, Tyr-90, and Val-133 contribute to the FAD site; that span reads FS.

Belongs to the FAD-binding monooxygenase family. Requires FAD as cofactor.

Its pathway is mycotoxin biosynthesis; sterigmatocystin biosynthesis. Functionally, FAD-binding monooxygenase; part of the gene cluster that mediates the biosynthesis of sterigmatocystin (ST), a polyketide-derived furanocoumarin which is part of the most toxic and carcinogenic compounds among the known mycotoxins. The first step in the biosynthesis of sterigmatocystin is the production of hexanoate by the fatty acid synthase (FAS) units stcJ and stcK. The polyketide backbone is assembled by the non-reducing polyketide synthase stcA by condensation of the starter hexanoyl-CoA and 7 malonyl-CoA extender units followed by cyclization and release of norsolorinic acid. Norsolorinic acid is the first stable intermediate in the biosynthesis of sterigmatocystin and is converted into averantin (AVN) by the ketoreductase stcE which reduces the hexanoate ketone to an alcohol. Averantin is then oxidized into 5'-hydroxyaverantin (HAVN) by the cytochrome P450 monooxygenase stcF. 5'-hydroxyaverantin is further converted to 5'-oxyaverantin (OAVN) by the 5'-hydroxyaverantin dehydrogenase stcG. The next step is the conversion of OAVN into averufin (AVF) which is catalyzed by a yet to be identified enzyme. The cytochrome P450 monooxygenase stcB and the flavin-binding monooxygenase stcW are both required for the conversion of averufin to 1-hydroxyversicolorone. The esterase stcI probably catalyzes the formation of versiconal hemiacetal acetate from 1-hydroxyversicolorone. The oxydoreductase stcN then probably catalyzes the biosynthetic step from versiconal to versicolorin B (VERB). The next step is performed by the versicolorin B desaturase stcL to produce versicolorin A (VERA). The ketoreductase stcU and the cytochrome P450 monooxygenase stcS are involved in the conversion of versicolorin A to demethylsterigmatocystin. The Baeyer-Villiger oxidas stcQ and the reductase stcR might be involved in the biosynthetic step from versicolorin A to demethylsterigmatocystin. The final step in the biosynthesis of sterigmatocystin is the methylation of demethylsterigmatocystin catalyzed by the methyltransferase stcP. In Emericella nidulans (strain FGSC A4 / ATCC 38163 / CBS 112.46 / NRRL 194 / M139) (Aspergillus nidulans), this protein is FAD-binding monooxygenase stcW.